The following is a 238-amino-acid chain: Lipid transferase CIDEC (238 aa).

The required for liquid-liquid phase separation (LLPS) stretch occupies residues 1-35; the sequence is MDYAMKSLSLLYPRSLSRHVAVSTAVVTQQLVSEP. A CIDE-N domain is found at 41–118; that stretch reads RARPCRVSTA…VLQKGQKWKS (78 aa).

It belongs to the CIDE family. As to quaternary structure, homodimer. Interacts with CIDEA. Homooligomer; undergoes liquid-liquid phase separation (LLPS) via its N-terminus, facilitating lipid droplet fusion, occurs at the lipid droplet contact sites. Interacts with PLIN1. Interacts with NFAT5; this interaction is direct and retains NFAT5 in the cytoplasm. Interacts with CEBPB. Interacts with isoform CLSTN3beta of CLSTN3; inhibiting the lipid transferase activity of CIDEC. In terms of processing, ubiquitinated and targeted to proteasomal degradation, resulting in a short half-life (about 15 minutes in 3T3-L1 cells). Protein stability depends on triaclyglycerol synthesis, fatty acid availability and lipid droplet formation.

Its subcellular location is the lipid droplet. It is found in the endoplasmic reticulum. The protein resides in the nucleus. It carries out the reaction a triacyl-sn-glycerol(in) = a triacyl-sn-glycerol(out). Functionally, lipid transferase specifically expressed in white adipose tissue, which promotes unilocular lipid droplet formation by mediating lipid droplet fusion. Lipid droplet fusion promotes their enlargement, restricting lipolysis and favoring lipid storage. Localizes on the lipid droplet surface, at focal contact sites between lipid droplets, and mediates atypical lipid droplet fusion by undergoing liquid-liquid phase separation (LLPS) and promoting directional net neutral lipid transfer from the smaller to larger lipid droplets. The transfer direction may be driven by the internal pressure difference between the contacting lipid droplet pair. Its role in neutral lipid transfer and lipid droplet enlargement is activated by the interaction with PLIN1. May also act as a CEBPB coactivator in the white adipose tissue to control the expression of a subset of CEBPB downstream target genes, including SOCS1, SOCS3, TGFB1, TGFBR1, ID2 and XDH. When overexpressed in preadipocytes, induces apoptosis or increases cell susceptibility to apoptosis induced by serum deprivation or TGFB treatment. The sequence is that of Lipid transferase CIDEC from Rattus norvegicus (Rat).